The following is a 202-amino-acid chain: Imidazoleglycerol-phosphate dehydratase (202 aa).

It belongs to the imidazoleglycerol-phosphate dehydratase family.

Its subcellular location is the cytoplasm. It catalyses the reaction D-erythro-1-(imidazol-4-yl)glycerol 3-phosphate = 3-(imidazol-4-yl)-2-oxopropyl phosphate + H2O. The protein operates within amino-acid biosynthesis; L-histidine biosynthesis; L-histidine from 5-phospho-alpha-D-ribose 1-diphosphate: step 6/9. The polypeptide is Imidazoleglycerol-phosphate dehydratase (Lactococcus lactis subsp. cremoris (strain SK11)).